A 510-amino-acid chain; its full sequence is Light-independent protochlorophyllide reductase subunit B (510 aa).

[4Fe-4S] cluster is bound at residue aspartate 36. Residue aspartate 296 is the Proton donor of the active site. Substrate is bound at residue 431-432 (GM).

This sequence belongs to the ChlB/BchB/BchZ family. Protochlorophyllide reductase is composed of three subunits; ChlL, ChlN and ChlB. Forms a heterotetramer of two ChlB and two ChlN subunits. [4Fe-4S] cluster is required as a cofactor.

It is found in the plastid. The protein localises to the chloroplast. The enzyme catalyses chlorophyllide a + oxidized 2[4Fe-4S]-[ferredoxin] + 2 ADP + 2 phosphate = protochlorophyllide a + reduced 2[4Fe-4S]-[ferredoxin] + 2 ATP + 2 H2O. The protein operates within porphyrin-containing compound metabolism; chlorophyll biosynthesis (light-independent). Functionally, component of the dark-operative protochlorophyllide reductase (DPOR) that uses Mg-ATP and reduced ferredoxin to reduce ring D of protochlorophyllide (Pchlide) to form chlorophyllide a (Chlide). This reaction is light-independent. The NB-protein (ChlN-ChlB) is the catalytic component of the complex. The protein is Light-independent protochlorophyllide reductase subunit B of Chlorokybus atmophyticus (Soil alga).